Here is a 596-residue protein sequence, read N- to C-terminus: Succinate dehydrogenase flavoprotein subunit (596 aa).

FAD is bound by residues 18–23 (GAGGAG), 41–56 (SKLF…AQGG), and Asp-225. Position 49 is a tele-8alpha-FAD histidine (His-49). Residues His-246 and Thr-258 each contribute to the substrate site. Arg-290 serves as the catalytic Proton acceptor. His-357 is a substrate binding site. Glu-391 serves as a coordination point for FAD. Arg-402 is a substrate binding site. 407-408 (SL) contributes to the FAD binding site.

The protein belongs to the FAD-dependent oxidoreductase 2 family. FRD/SDH subfamily. Part of an enzyme complex containing four subunits: a flavoprotein, an iron-sulfur, cytochrome b-556, and a hydrophobic anchor protein. FAD serves as cofactor.

Its subcellular location is the cell inner membrane. It catalyses the reaction a quinone + succinate = fumarate + a quinol. Its pathway is carbohydrate metabolism; tricarboxylic acid cycle; fumarate from succinate (bacterial route): step 1/1. In Rickettsia bellii (strain RML369-C), this protein is Succinate dehydrogenase flavoprotein subunit (sdhA).